Reading from the N-terminus, the 345-residue chain is S-adenosylmethionine:tRNA ribosyltransferase-isomerase (345 aa).

The protein belongs to the QueA family. Monomer.

The protein resides in the cytoplasm. It catalyses the reaction 7-aminomethyl-7-carbaguanosine(34) in tRNA + S-adenosyl-L-methionine = epoxyqueuosine(34) in tRNA + adenine + L-methionine + 2 H(+). The protein operates within tRNA modification; tRNA-queuosine biosynthesis. Its function is as follows. Transfers and isomerizes the ribose moiety from AdoMet to the 7-aminomethyl group of 7-deazaguanine (preQ1-tRNA) to give epoxyqueuosine (oQ-tRNA). In Helicobacter pylori (strain J99 / ATCC 700824) (Campylobacter pylori J99), this protein is S-adenosylmethionine:tRNA ribosyltransferase-isomerase.